A 1901-amino-acid chain; its full sequence is Methylcytosine dioxygenase tet3 (1901 aa).

The CXXC-type zinc finger occupies Ser58–Glu99. Cys65, Cys68, Cys71, Cys77, Cys80, Cys83, Cys93, and Cys98 together coordinate Zn(2+). Disordered stretches follow at residues Lys434 to Ser455, Trp602 to Ala658, Lys751 to Leu787, and Asp808 to Arg867. Polar residues-rich tracts occupy residues Ser442–Ser455 and Trp602–Lys614. Basic residues predominate over residues Lys640 to Lys652. A compositionally biased stretch (low complexity) spans Ser758–Ser771. Over residues Glu847–Arg867 the composition is skewed to polar residues. Zn(2+)-binding residues include Cys957, Cys959, Cys1017, His1043, and Cys1045. Arg1085 is a 2-oxoglutarate binding site. Cys1095, Cys1097, Cys1113, Cys1122, and Cys1182 together coordinate Zn(2+). Residue Cys1198 coordinates 2-oxoglutarate. His1204 contacts Zn(2+). 2 residues coordinate Fe cation: His1206 and Asp1208. Position 1240 (His1240) interacts with 2-oxoglutarate. Disordered regions lie at residues Ser1282–Lys1338, Tyr1457–Thr1501, Ser1591–Val1624, and Ser1680–Ile1745. Residues Arg1291–Thr1325 show a composition bias toward basic and acidic residues. A compositionally biased stretch (polar residues) spans Cys1326–Lys1338. A compositionally biased stretch (basic and acidic residues) spans Ser1465–His1474. The segment covering Ser1477–Val1487 has biased composition (polar residues). 2 stretches are compositionally biased toward polar residues: residues Ser1680 to Ser1693 and Ser1702 to His1719. His1780 contributes to the Fe cation binding site. Arg1795–Ser1797 lines the 2-oxoglutarate pocket.

The protein belongs to the TET family. The cofactor is Fe(2+). Requires Zn(2+) as cofactor.

The protein localises to the nucleus. The protein resides in the chromosome. It carries out the reaction a 5-methyl-2'-deoxycytidine in DNA + 2-oxoglutarate + O2 = a 5-hydroxymethyl-2'-deoxycytidine in DNA + succinate + CO2. The catalysed reaction is a 5-hydroxymethyl-2'-deoxycytidine in DNA + 2-oxoglutarate + O2 = a 5-formyl-2'-deoxycytidine in DNA + succinate + CO2 + H2O. It catalyses the reaction a 5-formyl-2'-deoxycytidine in DNA + 2-oxoglutarate + O2 = a 5-carboxyl-2'-deoxycytidine in DNA + succinate + CO2 + H(+). Dioxygenase that catalyzes the conversion of the modified genomic base 5-methylcytosine (5mC) into 5-hydroxymethylcytosine (5hmC) and plays a key role in epigenetic chromatin reprogramming during embryonic development. Conversion of 5mC into 5hmC probably constitutes the first step in cytosine demethylation. Selectively binds to the promoter region of target genes and contributes to regulate the expression of numerous developmental genes, including pax6, rax, sox9 and six3. May also contribute to the regulation of target genes in ways that do not require its enzyme activity. In Xenopus tropicalis (Western clawed frog), this protein is Methylcytosine dioxygenase tet3.